We begin with the raw amino-acid sequence, 358 residues long: Cholesterol galactosyltransferase (358 aa).

This sequence belongs to the glycosyltransferase 2 family.

The enzyme catalyses cholesterol + UDP-alpha-D-galactose = cholesteryl 3-beta-D-galactoside + UDP + H(+). Its pathway is glycolipid biosynthesis. Galactosyltransferase involved in the synthesis of cholesterol glycolipids, which are formed by the use of host-derived cholesterol and have been shown to be immunogenic, and possibly contribute to Lyme disease pathogenesis. Catalyzes the formation of cholesteryl beta-D-galactopyranoside (CGal) from cholesterol and UDP-alpha-D-galactose. Cannot use GDP-mannose. The chain is Cholesterol galactosyltransferase from Borreliella burgdorferi (strain ATCC 35210 / DSM 4680 / CIP 102532 / B31) (Borrelia burgdorferi).